Here is a 214-residue protein sequence, read N- to C-terminus: MAYIVGLTGGIGSGKSTIADLFMELGVPVVDADEVSRRLVEKGSPLLSKIATHFGADILTNGGELNRSKLREIIFNRPEQKNWLNALLHPAINEEMQRQLQAQQAPYVLFVVPLLIENNLMSLCDRILIIDVSPQTQLERATKRDKNQRELIQQIMNSQVSREKRLTFADDIINNDEDFAQNGDRIKQKVLELHQRYLQLAQQKSSTYDNKNDR.

The DPCK domain maps to 4-204; the sequence is IVGLTGGIGS…QRYLQLAQQK (201 aa). 12–17 serves as a coordination point for ATP; that stretch reads GSGKST.

This sequence belongs to the CoaE family.

The protein resides in the cytoplasm. It carries out the reaction 3'-dephospho-CoA + ATP = ADP + CoA + H(+). It participates in cofactor biosynthesis; coenzyme A biosynthesis; CoA from (R)-pantothenate: step 5/5. In terms of biological role, catalyzes the phosphorylation of the 3'-hydroxyl group of dephosphocoenzyme A to form coenzyme A. The polypeptide is Dephospho-CoA kinase (Mannheimia succiniciproducens (strain KCTC 0769BP / MBEL55E)).